The following is a 182-amino-acid chain: Small ribosomal subunit protein uS4c (182 aa).

Positions 13 to 34 (GLTSKRPRSGSDPKNQLRSGKR) are disordered. The 62-residue stretch at 82–143 (MRLDNILFRL…KQRSKALIQN (62 aa)) folds into the S4 RNA-binding domain.

The protein belongs to the universal ribosomal protein uS4 family. In terms of assembly, part of the 30S ribosomal subunit. Contacts protein S5. The interaction surface between S4 and S5 is involved in control of translational fidelity.

It is found in the plastid. Its subcellular location is the chloroplast. In terms of biological role, one of the primary rRNA binding proteins, it binds directly to 16S rRNA where it nucleates assembly of the body of the 30S subunit. Functionally, with S5 and S12 plays an important role in translational accuracy. This chain is Small ribosomal subunit protein uS4c (rps4), found in Iris lutescens (Crimean iris).